Here is a 275-residue protein sequence, read N- to C-terminus: Calcium uniporter protein, mitochondrial (275 aa).

Residues 1 to 28 constitute a mitochondrion transit peptide; that stretch reads MNSFVIRNGFGLVRTFNTRLFTTSTQNL. Topologically, residues 29–165 are mitochondrial matrix; that stretch reads EGELKTILGQ…DRKAHRRATA (137 aa). Residues 125-157 are a coiled coil; that stretch reads VGLNKLIESKKSEINSLRQKIQPLEEKKQVIDR. A helical membrane pass occupies residues 166–186; sequence IIWTGLGYCFAQAAILARLTW. Over 187 to 192 the chain is Mitochondrial intermembrane; the sequence is WDLSWD. The Selectivity filter motif lies at 191-199; it reads WDIIEPVSY. Residues 193-213 traverse the membrane as a helical segment; sequence IIEPVSYFLTFGSVLIGYTYF. Glutamate 195 lines the Ca(2+) pocket. At 214–275 the chain is on the mitochondrial matrix side; the sequence is TMTKTEFTYE…ELATKYDHTH (62 aa). The stretch at 244–270 forms a coiled coil; it reads PKEDYENLVQAIDKKEKELKELELATK.

The protein belongs to the MCU (TC 1.A.77) family. In terms of assembly, homooligomer.

It is found in the mitochondrion inner membrane. The catalysed reaction is Ca(2+)(in) = Ca(2+)(out). With respect to regulation, inhibited by ruthenium red or its derivative Ru360. In terms of biological role, mitochondrial inner membrane calcium uniporter that mediates calcium uptake into mitochondria. Constitutes a pore-forming and calcium-conducting subunit. Mitochondrial calcium homeostasis plays key roles in cellular physiology and regulates cell bioenergetics, cytoplasmic calcium signals and activation of cell death pathways. Sufficient to operate as a pore-forming channel without the need of calcium-sensor or auxiliary subunit. This chain is Calcium uniporter protein, mitochondrial, found in Dictyostelium discoideum (Social amoeba).